The following is a 181-amino-acid chain: MNNDSLAIIKQSIKTIPDYPKPGILFRDVTSLLEDHTAYKATMDILVQHYKDHGFTKIVGTEARGFLFGAPLALELGVGFVPVRKPGKLPRETISESYELEYGHDVLELHTDAINENDKVLVVDDLLATGGTIEATVKLIRKLGGEVKHAAFVISLPDLGGAKRLEEMDLELVTLCEFEGE.

This sequence belongs to the purine/pyrimidine phosphoribosyltransferase family. Homodimer.

It is found in the cytoplasm. The catalysed reaction is AMP + diphosphate = 5-phospho-alpha-D-ribose 1-diphosphate + adenine. It participates in purine metabolism; AMP biosynthesis via salvage pathway; AMP from adenine: step 1/1. Catalyzes a salvage reaction resulting in the formation of AMP, that is energically less costly than de novo synthesis. This chain is Adenine phosphoribosyltransferase, found in Shewanella woodyi (strain ATCC 51908 / MS32).